The chain runs to 93 residues: YcgL domain-containing protein KPN78578_22820 (93 aa).

Residues Met-1 to Leu-85 form the YcgL domain.

The chain is YcgL domain-containing protein KPN78578_22820 from Klebsiella pneumoniae subsp. pneumoniae (strain ATCC 700721 / MGH 78578).